The following is a 314-amino-acid chain: Acetaldehyde dehydrogenase (314 aa).

15-18 contributes to the NAD(+) binding site; sequence SGNI. Cys133 functions as the Acyl-thioester intermediate in the catalytic mechanism. NAD(+)-binding positions include 164-172 and Asn292; that span reads SAGPGTRAN.

The protein belongs to the acetaldehyde dehydrogenase family.

The catalysed reaction is acetaldehyde + NAD(+) + CoA = acetyl-CoA + NADH + H(+). This Paraburkholderia phytofirmans (strain DSM 17436 / LMG 22146 / PsJN) (Burkholderia phytofirmans) protein is Acetaldehyde dehydrogenase.